We begin with the raw amino-acid sequence, 270 residues long: Protein MGF 110-1L (270 aa).

The first 26 residues, 1 to 26, serve as a signal peptide directing secretion; it reads MLGLQIFTLLSIPTLLYTYEIEPLER. The Extracellular portion of the chain corresponds to 27–117; that stretch reads TSTPPEKEFG…HERHEADIRK (91 aa). The A repeat unit spans residues 27–146; the sequence is TSTPPEKEFG…YIRKRSLQTV (120 aa). Residue N75 is glycosylated (N-linked (GlcNAc...) asparagine; by host). The helical transmembrane segment at 118–138 threads the bilayer; the sequence is WQKLLTYGFYLAGCILAVNYI. At 139-145 the chain is on the cytoplasmic side; sequence RKRSLQT. A helical transmembrane segment spans residues 146–166; that stretch reads VMYLLVFLVISFLLSQLMLYG. Residues 147-270 form a B repeat; sequence MYLLVFLVIS…DNLMKKQDIM (124 aa). Over 167-270 the chain is Extracellular; it reads ELEDKKHKIG…DNLMKKQDIM (104 aa).

The protein belongs to the asfivirus MGF 110 family.

The protein localises to the membrane. Functionally, plays a role in virus cell tropism, and may be required for efficient virus replication in macrophages. This is Protein MGF 110-1L from African swine fever virus (isolate Pig/Portugal/OURT88/1988) (ASFV).